The primary structure comprises 318 residues: tRNA pseudouridine synthase B (318 aa).

Asp47 serves as the catalytic Nucleophile.

Belongs to the pseudouridine synthase TruB family. Type 1 subfamily.

It catalyses the reaction uridine(55) in tRNA = pseudouridine(55) in tRNA. Its function is as follows. Responsible for synthesis of pseudouridine from uracil-55 in the psi GC loop of transfer RNAs. In Aliivibrio salmonicida (strain LFI1238) (Vibrio salmonicida (strain LFI1238)), this protein is tRNA pseudouridine synthase B.